The chain runs to 217 residues: GrpE protein homolog 1, mitochondrial (217 aa).

Residues 1–27 constitute a mitochondrion transit peptide; it reads MAAQCVRLARRSLPALALSLRPSPRLL. Residues 29–56 form a disordered region; the sequence is TATKQKNSGQNLEEDMGQSEQKADPPAT. Positions 30 to 39 are enriched in polar residues; the sequence is ATKQKNSGQN. Residue K94 is modified to N6-acetyllysine; alternate. N6-succinyllysine; alternate is present on K94. K100 bears the N6-acetyllysine mark. K120 is modified (N6-succinyllysine). K215 carries the post-translational modification N6-acetyllysine; alternate. K215 is modified (N6-succinyllysine; alternate).

The protein belongs to the GrpE family. As to quaternary structure, probable component of the PAM complex at least composed of a mitochondrial HSP70 protein, GRPEL1 or GRPEL2, TIMM44, TIMM16/PAM16 and TIMM14/DNAJC19. Binds to HSP70, HSC70 and HSJ1B.

It localises to the mitochondrion matrix. In terms of biological role, essential component of the PAM complex, a complex required for the translocation of transit peptide-containing proteins from the inner membrane into the mitochondrial matrix in an ATP-dependent manner. Seems to control the nucleotide-dependent binding of mitochondrial HSP70 to substrate proteins. The chain is GrpE protein homolog 1, mitochondrial (GRPEL1) from Homo sapiens (Human).